Reading from the N-terminus, the 124-residue chain is Fluoride-specific ion channel FluC (124 aa).

A run of 4 helical transmembrane segments spans residues 4 to 24, 35 to 55, 70 to 90, and 95 to 115; these read ILFV…ISIF, FGTL…YALG, VGLL…LLLI, and WLKA…MVYL. 2 residues coordinate Na(+): Gly74 and Thr77.

It belongs to the fluoride channel Fluc/FEX (TC 1.A.43) family.

It localises to the cell inner membrane. It catalyses the reaction fluoride(in) = fluoride(out). Its activity is regulated as follows. Na(+) is not transported, but it plays an essential structural role and its presence is essential for fluoride channel function. In terms of biological role, fluoride-specific ion channel. Important for reducing fluoride concentration in the cell, thus reducing its toxicity. The polypeptide is Fluoride-specific ion channel FluC (Shewanella woodyi (strain ATCC 51908 / MS32)).